We begin with the raw amino-acid sequence, 275 residues long: Ribosomal RNA small subunit methyltransferase A (275 aa).

S-adenosyl-L-methionine contacts are provided by N20, L22, G47, E68, D90, and N110.

It belongs to the class I-like SAM-binding methyltransferase superfamily. rRNA adenine N(6)-methyltransferase family. RsmA subfamily.

The protein localises to the cytoplasm. The catalysed reaction is adenosine(1518)/adenosine(1519) in 16S rRNA + 4 S-adenosyl-L-methionine = N(6)-dimethyladenosine(1518)/N(6)-dimethyladenosine(1519) in 16S rRNA + 4 S-adenosyl-L-homocysteine + 4 H(+). Specifically dimethylates two adjacent adenosines (A1518 and A1519) in the loop of a conserved hairpin near the 3'-end of 16S rRNA in the 30S particle. May play a critical role in biogenesis of 30S subunits. The protein is Ribosomal RNA small subunit methyltransferase A of Chlorobaculum tepidum (strain ATCC 49652 / DSM 12025 / NBRC 103806 / TLS) (Chlorobium tepidum).